Consider the following 212-residue polypeptide: uncharacterized protein (212 aa).

The tract at residues 97-151 is disordered; that stretch reads SDASEAKNDDRRSDGRFALYSVSDTPETTTASRSADRSTNPKTAKHPKSAAKPTV. The segment covering 100-111 has biased composition (basic and acidic residues); the sequence is SEAKNDDRRSDG.

This is an uncharacterized protein from Mycobacterium tuberculosis (strain CDC 1551 / Oshkosh).